We begin with the raw amino-acid sequence, 572 residues long: Myb-like protein Y (572 aa).

The segment covering 196-211 has biased composition (polar residues); sequence QSQSQLPTATNNNNKQ. The interval 196-283 is disordered; it reads QSQSQLPTAT…NNNNNNNNNE (88 aa). Composition is skewed to low complexity over residues 222–237 and 260–281; these read TATA…TTTT and NDNN…NNNN. In terms of domain architecture, Myb-like spans 311-360; the sequence is PWTVEDQKKLEDALTKYPPSRFSSVSRWQMVSKELGISPKAVALRYNQML. The tract at residues 367–456 is disordered; the sequence is KPSLQQQQQQ…TTVTPNMTTP (90 aa). Composition is skewed to low complexity over residues 371 to 392 and 414 to 425; these read QQQQ…TTTT and SSFSSPSSSSKE. The span at 426–435 shows a compositional bias: basic and acidic residues; that stretch reads SPNKKEKTTH. The segment covering 436-455 has biased composition (low complexity); that stretch reads DTTTTTNTATTTTVTPNMTT.

In Dictyostelium discoideum (Social amoeba), this protein is Myb-like protein Y (mybY).